Consider the following 232-residue polypeptide: Small ribosomal subunit protein uS2 (232 aa).

Belongs to the universal ribosomal protein uS2 family.

The chain is Small ribosomal subunit protein uS2 from Natranaerobius thermophilus (strain ATCC BAA-1301 / DSM 18059 / JW/NM-WN-LF).